The chain runs to 1627 residues: Formin-like protein 5 (1627 aa).

Residues Arg5–Pro194 form the Phosphatase tensin-type domain. Cys127 serves as the catalytic Phosphocysteine intermediate. Residues Ser200 to Pro337 form the C2 tensin-type domain. Disordered stretches follow at residues Glu370–His413, Thr680–Ser787, Lys801–Val1181, Ala1241–Ser1261, and Lys1571–Gly1627. Composition is skewed to basic and acidic residues over residues Val402–His413, Lys681–Val691, Ile700–Pro717, and Met726–Gly742. Pro residues-rich tracts occupy residues Ala824–Tyr835, Gln852–Ala870, Ile877–Leu886, Val897–Arg908, Ile931–Ala965, and Ala974–Gly1168. In terms of domain architecture, FH2 spans Phe1188 to Lys1588. Composition is skewed to basic and acidic residues over residues Asp1248 to Ser1261 and Lys1571 to Lys1590. The segment covering Lys1600–Thr1611 has biased composition (polar residues). A compositionally biased stretch (basic and acidic residues) spans Pro1612–Gly1627.

Belongs to the formin-like family. Class-II subfamily.

This Oryza sativa subsp. japonica (Rice) protein is Formin-like protein 5 (FH5).